The sequence spans 192 residues: Vascular endothelial growth factor A (192 aa).

A signal peptide spans 1–26 (MNFLLSWIHWGLAALLYFHNAKVLQA). Disulfide bonds link C52-C94, C83-C128, and C87-C130. Residue N101 is glycosylated (N-linked (GlcNAc...) asparagine).

This sequence belongs to the PDGF/VEGF growth factor family. In terms of assembly, homodimer; disulfide-linked. Also found as heterodimer with PGF Interacts with FLT1/VEGFR1 and KDR/VEGFR2 receptors, heparan sulfate and heparin. As to expression, expressed by the venom gland, and probably other tissues.

The protein resides in the secreted. Its function is as follows. Growth factor active in angiogenesis, vasculogenesis and endothelial cell growth. Induces endothelial cell proliferation, promotes cell migration, inhibits apoptosis and induces permeabilization of blood vessels. This chain is Vascular endothelial growth factor A, found in Vipera ammodytes ammodytes (Western sand viper).